Here is a 305-residue protein sequence, read N- to C-terminus: Ribonuclease Z (305 aa).

Histidine 63, histidine 65, aspartate 67, histidine 68, histidine 142, aspartate 209, and histidine 267 together coordinate Zn(2+). The active-site Proton acceptor is aspartate 67.

This sequence belongs to the RNase Z family. Homodimer. Zn(2+) serves as cofactor.

The enzyme catalyses Endonucleolytic cleavage of RNA, removing extra 3' nucleotides from tRNA precursor, generating 3' termini of tRNAs. A 3'-hydroxy group is left at the tRNA terminus and a 5'-phosphoryl group is left at the trailer molecule.. In terms of biological role, zinc phosphodiesterase, which displays some tRNA 3'-processing endonuclease activity. Probably involved in tRNA maturation, by removing a 3'-trailer from precursor tRNA. In Nocardia farcinica (strain IFM 10152), this protein is Ribonuclease Z.